Reading from the N-terminus, the 435-residue chain is MSWVQVNLLVRSLSRGWGGLCRPALSGTPFAQVSLQALRGLHCSAATHKDEPWLVPRPPEPQRKPIKVPAMHEDLFKPSGNRERDKASFLNAVRSFGAHNVRKRGHVDFIYLALRKMPEFGVERDLSVYNLLLDVFPKEVFRPRNVIQRIFVHYPRQQECGVAVLEQMERHGVMPSAETEFLLIQIFGRKSYPMLKFLRMKLWFTRFKNINPYPVPRDLPQDPLDLAKLGLRHMEPDLSAKVTVYQMSLPSDSTGMEDPTQPHIVGIQSPDQQAALARHNPSRPVFVEGPFPLWLRNKCVYYHILRADLPPPEEEKVEEIPEEWELYYPQKLDLEYSRSGWDDYEFDVDEVTEGPVFAMCMAGAHDQATLIKWIQGLQETNPTLAQIPVVFRLARSTGELLTTSRLEGQSPPHSPPKGPEEDDETIQAEQQQGQS.

The N-terminal 48 residues, Met1 to His48, are a transit peptide targeting the mitochondrion. Lys372 is covalently cross-linked (Glycyl lysine isopeptide (Lys-Gly) (interchain with G-Cter in ubiquitin)). Residues Leu401–Ser435 form a disordered region.

This sequence belongs to the ECSIT family. Interacts with MAP3K1, SMAD4 and TRAF6. Interacts with SMAD1 only after BMP4-treatment. Part of the mitochondrial complex I assembly/MCIA complex that comprises at least the core subunits TMEM126B, NDUFAF1, ECSIT and ACAD9 and complement subunits such as COA1 and TMEM186. Interacts with NDUFAF1. Interacts with ACAD9. Interacts with TRIM59. Interacts with TMEM70 and TMEM242. Interacts (when ubiquitinated) with NF-kappa-B subunits RELA and NFKB1. Interacts with RIGI, IFIT1 and MAVS; these interactions promote RLR-mediated type I IFN induction. Interacts with SQSTM1; this interaction inhibits TLR4 signaling via functional regulation of the TRAF6-ECSIT complex. Interacts with cereblon/CRBN; this interaction inhibits the ubiquitination of ECSIT. In terms of processing, ubiquitinated on Lys-372; leading to translocation in the nucleus together with RELA and NFKB1 and expression of NF-kappa-B-dependent genes. Detected in heart, brain, lung, liver, skeletal muscle, kidney and testis. Detected in embryonic mesoderm and epiblast, and in extraembryonic ectoderm.

The protein localises to the cytoplasm. The protein resides in the nucleus. It is found in the mitochondrion. Functionally, adapter protein that plays a role in different signaling pathways including TLRs and IL-1 pathways or innate antiviral induction signaling. Plays a role in the activation of NF-kappa-B by forming a signal complex with TRAF6 and TAK1/MAP3K7 to activate TAK1/MAP3K7 leading to activation of IKKs. Once ubiquitinated, interacts with the dissociated RELA and NFKB1 proteins and translocates to the nucleus where it induces NF-kappa-B-dependent gene expression. Plays a role in innate antiviral immune response by bridging the pattern recognition receptors RIGI and MDA5/IFIT1 to the MAVS complex at the mitochondrion. Promotes proteolytic activation of MAP3K1. Involved in the BMP signaling pathway. Required for normal embryonic development. Its function is as follows. As part of the MCIA complex, involved in the assembly of the mitochondrial complex I. In Mus musculus (Mouse), this protein is Evolutionarily conserved signaling intermediate in Toll pathway, mitochondrial.